The sequence spans 661 residues: Peroxisomal acyl-coenzyme A oxidase 1 (661 aa).

Phosphoserine is present on serine 26. Residue lysine 65 is modified to N6-acetyllysine. N6-succinyllysine occurs at positions 89 and 90. Threonine 139 contributes to the FAD binding site. Lysine 159 carries the post-translational modification N6-succinyllysine. FAD is bound at residue glycine 178. Lysine 216 bears the N6-acetyllysine mark. Residue lysine 241 is modified to N6-succinyllysine. 3 positions are modified to N6-acetyllysine: lysine 255, lysine 267, and lysine 272. Lysine 349 carries the post-translational modification N6-succinyllysine. Glutamate 421 (proton acceptor) is an active-site residue. An N6-acetyllysine; alternate mark is found at lysine 437 and lysine 446. An N6-succinyllysine; alternate mark is found at lysine 437 and lysine 446. Lysine 500 bears the N6-acetyllysine mark. At lysine 512 the chain carries N6-acetyllysine; alternate. Lysine 512 carries the N6-succinyllysine; alternate modification. The residue at position 542 (lysine 542) is an N6-succinyllysine. Residue lysine 637 is modified to N6-acetyllysine; alternate. N6-succinyllysine; alternate is present on lysine 637. Lysine 643 is subject to N6-succinyllysine. Serine 649 carries the post-translational modification Phosphoserine. Lysine 652 bears the N6-acetyllysine mark. The residue at position 655 (lysine 655) is an N6-succinyllysine. The short motif at 659 to 661 (SKL) is the Microbody targeting signal element.

The protein belongs to the acyl-CoA oxidase family. In terms of assembly, homodimer. Interacts with LONP2. It depends on FAD as a cofactor. Highest levels of isoform 1 are found in liver and kidney while highest levels of isoform 2 are found in white adipose tissue. Isoform 1 is expressed at higher levels than isoform 2 in liver and kidney while isoform 2 is expressed at higher levels in brain, heart, lung, muscle, white adipose tissue and testis.

Its subcellular location is the peroxisome. The enzyme catalyses a 2,3-saturated acyl-CoA + O2 = a (2E)-enoyl-CoA + H2O2. The catalysed reaction is hexadecanoyl-CoA + O2 = (2E)-hexadecenoyl-CoA + H2O2. It catalyses the reaction dodecanoyl-CoA + O2 = (2E)-dodecenoyl-CoA + H2O2. It carries out the reaction octanoyl-CoA + O2 = (2E)-octenoyl-CoA + H2O2. The enzyme catalyses decanoyl-CoA + O2 = (2E)-decenoyl-CoA + H2O2. The catalysed reaction is tetradecanoyl-CoA + O2 = (2E)-tetradecenoyl-CoA + H2O2. It catalyses the reaction hexadecanedioyl-CoA + O2 = (2E)-hexadecenedioyl-CoA + H2O2. It carries out the reaction tetracosanoyl-CoA + O2 = (2E)-tetracosenoyl-CoA + H2O2. The enzyme catalyses glutaryl-CoA + O2 = (2E)-glutaconyl-CoA + H2O2. The catalysed reaction is hexanoyl-CoA + O2 = (2E)-hexenoyl-CoA + H2O2. It catalyses the reaction octadecanoyl-CoA + O2 = (2E)-octadecenoyl-CoA + H2O2. It carries out the reaction (5Z,8Z,11Z,14Z,17Z)-eicosapentaenoyl-CoA + O2 = (2E,5Z,8Z,11Z,14Z,17Z)-icosahexaenoyl-CoA + H2O2. The enzyme catalyses (6Z,9Z,12Z,15Z,18Z,21Z)-tetracosahexaenoyl-CoA + O2 = (2E,6Z,9Z,12Z,15Z,18Z,21Z)-tetracosaheptaenoyl-CoA + H2O2. Its pathway is lipid metabolism; peroxisomal fatty acid beta-oxidation. In terms of biological role, involved in the initial and rate-limiting step of peroxisomal beta-oxidation of straight-chain saturated and unsaturated very-long-chain fatty acids. Catalyzes the desaturation of fatty acyl-CoAs such as palmitoyl-CoA (hexadecanoyl-CoA) to 2-trans-enoyl-CoAs ((2E)-enoyl-CoAs) such as (2E)-hexadecenoyl-CoA, and donates electrons directly to molecular oxygen (O(2)), thereby producing hydrogen peroxide (H(2)O(2)). Shows highest activity against medium-chain fatty acyl-CoAs. Shows optimum activity with a chain length of 10 carbons (decanoyl-CoA) in vitro. Functionally, is active against a much broader range of substrates and shows activity towards long-chain acyl-CoAs. The chain is Peroxisomal acyl-coenzyme A oxidase 1 from Mus musculus (Mouse).